The primary structure comprises 277 residues: Putative thiosulfate sulfurtransferase (277 aa).

Rhodanese domains lie at 18 to 125 and 154 to 274; these read KAPK…PLSA and AIGT…APIE. Lysine 67 is covalently cross-linked (Isoglutamyl lysine isopeptide (Lys-Gln) (interchain with Q-Cter in protein Pup)). Catalysis depends on cysteine 233, which acts as the Cysteine persulfide intermediate. Substrate is bound at residue arginine 238.

The catalysed reaction is thiosulfate + hydrogen cyanide = thiocyanate + sulfite + 2 H(+). May be a sulfotransferase involved in the formation of thiosulfate. This chain is Putative thiosulfate sulfurtransferase, found in Mycolicibacterium smegmatis (strain ATCC 700084 / mc(2)155) (Mycobacterium smegmatis).